The following is a 228-amino-acid chain: LexA repressor (228 aa).

Residues 28-48 constitute a DNA-binding region (H-T-H motif); that stretch reads IREIGEALDIRSTNGVNDHLK. Residues S146 and K183 each act as for autocatalytic cleavage activity in the active site.

The protein belongs to the peptidase S24 family. As to quaternary structure, homodimer.

It carries out the reaction Hydrolysis of Ala-|-Gly bond in repressor LexA.. Its function is as follows. Represses a number of genes involved in the response to DNA damage (SOS response), including recA and lexA. In the presence of single-stranded DNA, RecA interacts with LexA causing an autocatalytic cleavage which disrupts the DNA-binding part of LexA, leading to derepression of the SOS regulon and eventually DNA repair. This is LexA repressor from Anaeromyxobacter dehalogenans (strain 2CP-1 / ATCC BAA-258).